The primary structure comprises 355 residues: UDP-N-acetylglucosamine--N-acetylmuramyl-(pentapeptide) pyrophosphoryl-undecaprenol N-acetylglucosamine transferase (355 aa).

UDP-N-acetyl-alpha-D-glucosamine-binding positions include 11 to 13 (TGG), Asn123, Arg162, Ser185, Ile239, 258 to 263 (ALTVSE), and Gln284.

Belongs to the glycosyltransferase 28 family. MurG subfamily.

The protein resides in the cell inner membrane. It carries out the reaction di-trans,octa-cis-undecaprenyl diphospho-N-acetyl-alpha-D-muramoyl-L-alanyl-D-glutamyl-meso-2,6-diaminopimeloyl-D-alanyl-D-alanine + UDP-N-acetyl-alpha-D-glucosamine = di-trans,octa-cis-undecaprenyl diphospho-[N-acetyl-alpha-D-glucosaminyl-(1-&gt;4)]-N-acetyl-alpha-D-muramoyl-L-alanyl-D-glutamyl-meso-2,6-diaminopimeloyl-D-alanyl-D-alanine + UDP + H(+). Its pathway is cell wall biogenesis; peptidoglycan biosynthesis. Its function is as follows. Cell wall formation. Catalyzes the transfer of a GlcNAc subunit on undecaprenyl-pyrophosphoryl-MurNAc-pentapeptide (lipid intermediate I) to form undecaprenyl-pyrophosphoryl-MurNAc-(pentapeptide)GlcNAc (lipid intermediate II). This Hydrogenovibrio crunogenus (strain DSM 25203 / XCL-2) (Thiomicrospira crunogena) protein is UDP-N-acetylglucosamine--N-acetylmuramyl-(pentapeptide) pyrophosphoryl-undecaprenol N-acetylglucosamine transferase.